Consider the following 148-residue polypeptide: Large ribosomal subunit protein uL15 (148 aa).

Residues 1–10 (MQLHNLEYKK) are compositionally biased toward basic and acidic residues. The tract at residues 1–42 (MQLHNLEYKKGSRNHKEKRVGRGHGSGLGKTSGRGQDGQKAR) is disordered. Over residues 11 to 22 (GSRNHKEKRVGR) the composition is skewed to basic residues. Residues 23 to 36 (GHGSGLGKTSGRGQ) show a composition bias toward gly residues.

This sequence belongs to the universal ribosomal protein uL15 family. As to quaternary structure, part of the 50S ribosomal subunit.

Binds to the 23S rRNA. This Ureaplasma parvum serovar 3 (strain ATCC 27815 / 27 / NCTC 11736) protein is Large ribosomal subunit protein uL15.